Here is a 220-residue protein sequence, read N- to C-terminus: Probable GTP-binding protein EngB (220 aa).

One can recognise an EngB-type G domain in the interval 26–200 (EGIEIAFAGR…RAKLDEWYAP (175 aa)). GTP-binding positions include 34–41 (GRSNAGKS), 61–65 (GRTQL), 79–82 (DLPG), 146–149 (TKAD), and 179–181 (FSS). Positions 41 and 63 each coordinate Mg(2+).

This sequence belongs to the TRAFAC class TrmE-Era-EngA-EngB-Septin-like GTPase superfamily. EngB GTPase family. Mg(2+) serves as cofactor.

Functionally, necessary for normal cell division and for the maintenance of normal septation. In Vibrio cholerae serotype O1 (strain ATCC 39315 / El Tor Inaba N16961), this protein is Probable GTP-binding protein EngB.